Consider the following 268-residue polypeptide: Hydroxyethylthiazole kinase (268 aa).

Methionine 47 provides a ligand contact to substrate. Arginine 122 and threonine 168 together coordinate ATP. Alanine 195 contacts substrate.

It belongs to the Thz kinase family. It depends on Mg(2+) as a cofactor.

The catalysed reaction is 5-(2-hydroxyethyl)-4-methylthiazole + ATP = 4-methyl-5-(2-phosphooxyethyl)-thiazole + ADP + H(+). It functions in the pathway cofactor biosynthesis; thiamine diphosphate biosynthesis; 4-methyl-5-(2-phosphoethyl)-thiazole from 5-(2-hydroxyethyl)-4-methylthiazole: step 1/1. In terms of biological role, catalyzes the phosphorylation of the hydroxyl group of 4-methyl-5-beta-hydroxyethylthiazole (THZ). This is Hydroxyethylthiazole kinase from Rhizobium rhizogenes (strain K84 / ATCC BAA-868) (Agrobacterium radiobacter).